We begin with the raw amino-acid sequence, 118 residues long: NADH-quinone oxidoreductase subunit A 2 (118 aa).

Transmembrane regions (helical) follow at residues 5-25, 60-80, and 87-107; these read YLPI…SLVF, FYII…LYPW, and LGMF…VGYI.

Belongs to the complex I subunit 3 family. As to quaternary structure, NDH-1 is composed of 14 different subunits. Subunits NuoA, H, J, K, L, M, N constitute the membrane sector of the complex.

It is found in the cell inner membrane. It carries out the reaction a quinone + NADH + 5 H(+)(in) = a quinol + NAD(+) + 4 H(+)(out). Functionally, NDH-1 shuttles electrons from NADH, via FMN and iron-sulfur (Fe-S) centers, to quinones in the respiratory chain. The immediate electron acceptor for the enzyme in this species is believed to be ubiquinone. Couples the redox reaction to proton translocation (for every two electrons transferred, four hydrogen ions are translocated across the cytoplasmic membrane), and thus conserves the redox energy in a proton gradient. This is NADH-quinone oxidoreductase subunit A 2 from Geobacter metallireducens (strain ATCC 53774 / DSM 7210 / GS-15).